Reading from the N-terminus, the 181-residue chain is Bifunctional protein PyrR (181 aa).

Residues 101 to 113 (VIVVDDVLYTGRT) carry the PRPP-binding motif.

The protein belongs to the purine/pyrimidine phosphoribosyltransferase family. PyrR subfamily. In terms of assembly, homodimer and homohexamer; in equilibrium.

It catalyses the reaction UMP + diphosphate = 5-phospho-alpha-D-ribose 1-diphosphate + uracil. Functionally, regulates transcriptional attenuation of the pyrimidine nucleotide (pyr) operon by binding in a uridine-dependent manner to specific sites on pyr mRNA. This disrupts an antiterminator hairpin in the RNA and favors formation of a downstream transcription terminator, leading to a reduced expression of downstream genes. In terms of biological role, also displays a weak uracil phosphoribosyltransferase activity which is not physiologically significant. This chain is Bifunctional protein PyrR, found in Bacillus velezensis (strain DSM 23117 / BGSC 10A6 / LMG 26770 / FZB42) (Bacillus amyloliquefaciens subsp. plantarum).